Reading from the N-terminus, the 451-residue chain is Phosphoglucosamine mutase (451 aa).

Serine 101 serves as the catalytic Phosphoserine intermediate. Positions 101, 240, 242, and 244 each coordinate Mg(2+). Serine 101 bears the Phosphoserine mark.

The protein belongs to the phosphohexose mutase family. Requires Mg(2+) as cofactor. In terms of processing, activated by phosphorylation.

It catalyses the reaction alpha-D-glucosamine 1-phosphate = D-glucosamine 6-phosphate. In terms of biological role, catalyzes the conversion of glucosamine-6-phosphate to glucosamine-1-phosphate. The sequence is that of Phosphoglucosamine mutase from Streptococcus pyogenes serotype M3 (strain SSI-1).